The chain runs to 363 residues: Protein EXORDIUM-like 5 (363 aa).

The first 25 residues, methionine 1 to serine 25, serve as a signal peptide directing secretion. Asparagine 144 carries N-linked (GlcNAc...) asparagine glycosylation.

The protein belongs to the EXORDIUM family.

The protein resides in the secreted. Its subcellular location is the extracellular space. It is found in the apoplast. Its function is as follows. May play a role in a brassinosteroid-dependent regulation of growth and development. In Arabidopsis thaliana (Mouse-ear cress), this protein is Protein EXORDIUM-like 5 (EXL5).